The sequence spans 58 residues: UPF0391 membrane protein Patl_4137 (58 aa).

2 consecutive transmembrane segments (helical) span residues 4-24 and 27-47; these read WALTFLIIAILAGVMGFGGIA and AAGIAKIIFFVFLVLLVLSLV.

Belongs to the UPF0391 family.

It localises to the cell membrane. The chain is UPF0391 membrane protein Patl_4137 from Pseudoalteromonas atlantica (strain T6c / ATCC BAA-1087).